The chain runs to 205 residues: Protein N-terminal glutamine amidohydrolase (205 aa).

Residues Cys-20, His-74, and Asp-90 contribute to the active site.

It belongs to the NTAQ1 family. As to quaternary structure, monomer.

The enzyme catalyses N-terminal L-glutaminyl-[protein] + H2O = N-terminal L-glutamyl-[protein] + NH4(+). Functionally, mediates the side-chain deamidation of N-terminal glutamine residues to glutamate, an important step in N-end rule pathway of protein degradation. Conversion of the resulting N-terminal glutamine to glutamate renders the protein susceptible to arginylation, polyubiquitination and degradation as specified by the N-end rule. Does not act on substrates with internal or C-terminal glutamine and does not act on non-glutamine residues in any position. The polypeptide is Protein N-terminal glutamine amidohydrolase (tun) (Drosophila pseudoobscura pseudoobscura (Fruit fly)).